We begin with the raw amino-acid sequence, 276 residues long: MHFHFSKMHGLGNDFMVVDCITQNIFFSPDLIRRLADRHTGVGFDQLLVVEAPYDPETDFHYRIFNADGSEVEQCGNGARCFARFVRMKGLTNKYSINVSTKKGKMVLKIEDNDLITVNMGIPEFEPGKIPFKAKQPEKTYILRTDVHTLFCGAVSMGNPHVVTVVDDVDTADVDTLGPLLESHERFPERVNAGFMQVVNREEVRLRVYERGAGETQACGSGACGAVAVGITQGLLAENVKVRLPGGDLHISWQGPGKPLLMTGPATHVFDGQLSC.

3 residues coordinate substrate: N13, Q46, and N66. The Proton donor role is filled by C75. Residues 76-77, N159, N192, and 210-211 contribute to the substrate site; these read GN and ER. C219 (proton acceptor) is an active-site residue. 220-221 lines the substrate pocket; that stretch reads GS.

Belongs to the diaminopimelate epimerase family. Homodimer.

The protein resides in the cytoplasm. It carries out the reaction (2S,6S)-2,6-diaminopimelate = meso-2,6-diaminopimelate. The protein operates within amino-acid biosynthesis; L-lysine biosynthesis via DAP pathway; DL-2,6-diaminopimelate from LL-2,6-diaminopimelate: step 1/1. Its function is as follows. Catalyzes the stereoinversion of LL-2,6-diaminopimelate (L,L-DAP) to meso-diaminopimelate (meso-DAP), a precursor of L-lysine and an essential component of the bacterial peptidoglycan. This chain is Diaminopimelate epimerase, found in Vibrio atlanticus (strain LGP32) (Vibrio splendidus (strain Mel32)).